Reading from the N-terminus, the 261-residue chain is Cytochrome c oxidase subunit 3 (261 aa).

The Mitochondrial matrix portion of the chain corresponds to 1–15 (MTHQTHAYHMVNPSP). The helical transmembrane segment at 16–34 (WPLTGALSALLMTSGLTMW) threads the bilayer. The Mitochondrial intermembrane portion of the chain corresponds to 35–40 (FHFNSM). Residues 41–66 (LLLSLGLLTNTLTMYQWWRDIIREST) traverse the membrane as a helical segment. At 67–72 (FQGHHT) the chain is on the mitochondrial matrix side. The helical transmembrane segment at 73–105 (SVVQKGLRYGMILFIISEVLFFTGFFWAFYHSS) threads the bilayer. Over 106-128 (LAPTPELGGCWPPTGIHPLNPLE) the chain is Mitochondrial intermembrane. A helical membrane pass occupies residues 129–152 (VPLLNTSILLASGVSITWAHHSLM). The Mitochondrial matrix portion of the chain corresponds to 153-155 (EGD). Residues 156 to 183 (RKHMIQALSITIALGVYFTLLQASEYYE) traverse the membrane as a helical segment. At 184-190 (APFTISD) the chain is on the mitochondrial intermembrane side. A helical transmembrane segment spans residues 191 to 223 (GVYGSTFFVATGFHGLHVIIGSTFLAVCLLRQL). The Mitochondrial matrix segment spans residues 224–232 (KFHFTSNHH). The helical transmembrane segment at 233-256 (FGFEAAAWYWHFVDVVWLFLYVSI) threads the bilayer. The Mitochondrial intermembrane portion of the chain corresponds to 257 to 261 (YWWGS).

This sequence belongs to the cytochrome c oxidase subunit 3 family. In terms of assembly, component of the cytochrome c oxidase (complex IV, CIV), a multisubunit enzyme composed of 14 subunits. The complex is composed of a catalytic core of 3 subunits MT-CO1, MT-CO2 and MT-CO3, encoded in the mitochondrial DNA, and 11 supernumerary subunits COX4I, COX5A, COX5B, COX6A, COX6B, COX6C, COX7A, COX7B, COX7C, COX8 and NDUFA4, which are encoded in the nuclear genome. The complex exists as a monomer or a dimer and forms supercomplexes (SCs) in the inner mitochondrial membrane with NADH-ubiquinone oxidoreductase (complex I, CI) and ubiquinol-cytochrome c oxidoreductase (cytochrome b-c1 complex, complex III, CIII), resulting in different assemblies (supercomplex SCI(1)III(2)IV(1) and megacomplex MCI(2)III(2)IV(2)).

The protein resides in the mitochondrion inner membrane. The enzyme catalyses 4 Fe(II)-[cytochrome c] + O2 + 8 H(+)(in) = 4 Fe(III)-[cytochrome c] + 2 H2O + 4 H(+)(out). Its function is as follows. Component of the cytochrome c oxidase, the last enzyme in the mitochondrial electron transport chain which drives oxidative phosphorylation. The respiratory chain contains 3 multisubunit complexes succinate dehydrogenase (complex II, CII), ubiquinol-cytochrome c oxidoreductase (cytochrome b-c1 complex, complex III, CIII) and cytochrome c oxidase (complex IV, CIV), that cooperate to transfer electrons derived from NADH and succinate to molecular oxygen, creating an electrochemical gradient over the inner membrane that drives transmembrane transport and the ATP synthase. Cytochrome c oxidase is the component of the respiratory chain that catalyzes the reduction of oxygen to water. Electrons originating from reduced cytochrome c in the intermembrane space (IMS) are transferred via the dinuclear copper A center (CU(A)) of subunit 2 and heme A of subunit 1 to the active site in subunit 1, a binuclear center (BNC) formed by heme A3 and copper B (CU(B)). The BNC reduces molecular oxygen to 2 water molecules using 4 electrons from cytochrome c in the IMS and 4 protons from the mitochondrial matrix. The chain is Cytochrome c oxidase subunit 3 (MT-CO3) from Sus scrofa (Pig).